We begin with the raw amino-acid sequence, 427 residues long: Glutamate-1-semialdehyde 2,1-aminomutase (427 aa).

The residue at position 265 (lysine 265) is an N6-(pyridoxal phosphate)lysine.

This sequence belongs to the class-III pyridoxal-phosphate-dependent aminotransferase family. HemL subfamily. Homodimer. Requires pyridoxal 5'-phosphate as cofactor.

It is found in the cytoplasm. It catalyses the reaction (S)-4-amino-5-oxopentanoate = 5-aminolevulinate. It participates in porphyrin-containing compound metabolism; protoporphyrin-IX biosynthesis; 5-aminolevulinate from L-glutamyl-tRNA(Glu): step 2/2. The protein is Glutamate-1-semialdehyde 2,1-aminomutase of Paraburkholderia phytofirmans (strain DSM 17436 / LMG 22146 / PsJN) (Burkholderia phytofirmans).